A 239-amino-acid polypeptide reads, in one-letter code: Ribonuclease PH (239 aa).

Phosphate is bound by residues Arg-86 and 124–126; that span reads GTR.

This sequence belongs to the RNase PH family. In terms of assembly, homohexameric ring arranged as a trimer of dimers.

The catalysed reaction is tRNA(n+1) + phosphate = tRNA(n) + a ribonucleoside 5'-diphosphate. Functionally, phosphorolytic 3'-5' exoribonuclease that plays an important role in tRNA 3'-end maturation. Removes nucleotide residues following the 3'-CCA terminus of tRNAs; can also add nucleotides to the ends of RNA molecules by using nucleoside diphosphates as substrates, but this may not be physiologically important. Probably plays a role in initiation of 16S rRNA degradation (leading to ribosome degradation) during starvation. This chain is Ribonuclease PH, found in Aromatoleum aromaticum (strain DSM 19018 / LMG 30748 / EbN1) (Azoarcus sp. (strain EbN1)).